A 432-amino-acid polypeptide reads, in one-letter code: Mannose-6-phosphate isomerase 1 (432 aa).

Met1 carries the post-translational modification N-acetylmethionine. The Zn(2+) site is built by Gln124, His126, Glu151, and His288. The active site involves Arg307.

Belongs to the mannose-6-phosphate isomerase type 1 family. Zn(2+) is required as a cofactor. As to expression, constitutively expressed in both vegetative and reproductive organs under normal growth conditions (at protein level).

The catalysed reaction is D-mannose 6-phosphate = D-fructose 6-phosphate. The protein operates within nucleotide-sugar biosynthesis; GDP-alpha-D-mannose biosynthesis; alpha-D-mannose 1-phosphate from D-fructose 6-phosphate: step 1/2. With respect to regulation, inhibited by EDTA, Zn(2+), Cd(2+), Co(2+), p-chloromercuribenzoate and L-ascorbic acid (AsA). In terms of biological role, phosphomannose isomerase involved in the synthesis of the GDP-mannose and dolichol-phosphate-mannose required for a number of critical mannosyl transfer reactions. Involved in the ascorbic acid (AsA) biosynthesis. Required during the endosperm development. The polypeptide is Mannose-6-phosphate isomerase 1 (PMI1) (Arabidopsis thaliana (Mouse-ear cress)).